We begin with the raw amino-acid sequence, 345 residues long: Transcription factor 19 (345 aa).

Residues 31 to 88 (YRLGHRADLCDVALRPQQEPGLISGIHAELHAEPRGDDWRVSLEDHSLQGTLVNNVRL) enclose the FHA domain. Disordered regions lie at residues 138–167 (RSRG…STLS) and 190–277 (LTFS…KYPV). The PHD-type zinc finger occupies 293–342 (AAPCCCLPQEETVAWVQCDGCDVWFHVACVGCSIQAAREADFRCPGCRAG). Zn(2+) is bound by residues C296, C298, C310, C313, H318, C321, C336, and C339.

It localises to the nucleus. Potential transcription factor that may play a role in the regulation of genes involved in cell cycle G1/S transition. May bind to regulatory elements of genes, including the promoter of the transcription factor FOXO1. This chain is Transcription factor 19 (TCF19), found in Macaca mulatta (Rhesus macaque).